The chain runs to 440 residues: Aclacinomycin-T 2-deoxy-L-fucose transferase (440 aa).

The catalysed reaction is dTDP-2-deoxy-beta-L-fucose + aclacinomycin T = aclacinomycin S + dTDP + H(+). In terms of biological role, involved in the biosynthesis of the trisaccharide moiety characteristic of the antitumor drug aclacinomycins. In the first reaction, AknK catalyzes the transfer of 2-deoxy-beta-L-fucose from the activated donor dTDP-2-deoxy-beta-L-fucose to the mono-glycosylated aclacinomycin T (rhodosaminyl aklavinone), forming the di-glycosylated aclacinomycin S (L-2-deoxyfucosyl-L-rhodosaminyl aklavinone). It can also catalyze the addition of an alternate dTDP-L-sugar, dTDP-L-daunosamine, to aclacinomycin T and the addition of 2-deoxy-beta-L-fucose to the mono-glycosylated aglycones (monoglycosylated anthracyclines) such as daunomycin (daunorubicin), adriamycin (doxorubicin) and idarubicin. In vitro, AknK also catalyzes the addition of a second L-2-deoxyfucosyl moiety from dTDP-2-deoxy-beta-L-fucose, albeit with reduced activity, to the natural disaccharide chain of aclacinomycin S to produce L-deoxyfucosyl-L-deoxyfucosyl-L-rhodosaminyl aklavinone (2-deoxy-alpha-D-fucosyl-aclacinomycin S), a variant of the natural aclacinomycin A. The chain is Aclacinomycin-T 2-deoxy-L-fucose transferase from Streptomyces galilaeus.